The sequence spans 1062 residues: Suppressor of mar1-1 protein (1062 aa).

Residues Met-1–Arg-17 show a composition bias toward polar residues. Disordered regions lie at residues Met-1 to Asp-27, Glu-188 to Ser-217, Thr-267 to Thr-337, Ser-370 to Gln-398, Glu-595 to Gly-634, and Ser-681 to Gly-804. Ser-2 is modified (N-acetylserine). Positions Asn-189–Arg-205 are enriched in low complexity. Polar residues-rich tracts occupy residues Thr-267–Ser-279, Ser-287–Glu-298, and Ser-305–Ile-323. Residues Ile-325 to Lys-335 show a composition bias toward basic residues. Composition is skewed to polar residues over residues Ser-370 to Ser-385 and Thr-610 to Asp-629. A phosphoserine mark is found at Ser-378, Ser-379, Ser-628, and Ser-681. Positions Ala-685–Gly-699 are enriched in basic and acidic residues. A Phosphothreonine modification is found at Thr-697. Positions Thr-704 to Asp-716 are enriched in polar residues. Ser-712 bears the Phosphoserine; by ATM or ATR mark. Ser-738 is modified (phosphoserine). Residues Lys-781–Ala-793 are compositionally biased toward polar residues. At Thr-817 the chain carries Phosphothreonine.

As to quaternary structure, interacts with RFM1. This interaction is required to recruit HST1.

It localises to the nucleus. Its function is as follows. DNA-binding protein that specifically binds the regulatory region of middle sporulation genes (MSE). Required for the repression of middle sporulation genes during vegetative growth. Represses expression via the recruitment of histone deacetylase HST1. This is Suppressor of mar1-1 protein (SUM1) from Saccharomyces cerevisiae (strain ATCC 204508 / S288c) (Baker's yeast).